The primary structure comprises 262 residues: Acyl-[acyl-carrier-protein]--UDP-N-acetylglucosamine O-acyltransferase (262 aa).

This sequence belongs to the transferase hexapeptide repeat family. LpxA subfamily. In terms of assembly, homotrimer.

It is found in the cytoplasm. The enzyme catalyses a (3R)-hydroxyacyl-[ACP] + UDP-N-acetyl-alpha-D-glucosamine = a UDP-3-O-[(3R)-3-hydroxyacyl]-N-acetyl-alpha-D-glucosamine + holo-[ACP]. The protein operates within glycolipid biosynthesis; lipid IV(A) biosynthesis; lipid IV(A) from (3R)-3-hydroxytetradecanoyl-[acyl-carrier-protein] and UDP-N-acetyl-alpha-D-glucosamine: step 1/6. Functionally, involved in the biosynthesis of lipid A, a phosphorylated glycolipid that anchors the lipopolysaccharide to the outer membrane of the cell. The protein is Acyl-[acyl-carrier-protein]--UDP-N-acetylglucosamine O-acyltransferase of Salmonella arizonae (strain ATCC BAA-731 / CDC346-86 / RSK2980).